Consider the following 325-residue polypeptide: Tagatose 1,6-diphosphate aldolase (325 aa).

It belongs to the aldolase LacD family.

The catalysed reaction is D-tagatofuranose 1,6-bisphosphate = D-glyceraldehyde 3-phosphate + dihydroxyacetone phosphate. Its pathway is carbohydrate metabolism; D-tagatose 6-phosphate degradation; D-glyceraldehyde 3-phosphate and glycerone phosphate from D-tagatose 6-phosphate: step 2/2. In Staphylococcus epidermidis (strain ATCC 12228 / FDA PCI 1200), this protein is Tagatose 1,6-diphosphate aldolase.